The following is a 506-amino-acid chain: Proline--tRNA ligase (506 aa).

It belongs to the class-II aminoacyl-tRNA synthetase family. ProS type 3 subfamily. Homodimer.

Its subcellular location is the cytoplasm. The enzyme catalyses tRNA(Pro) + L-proline + ATP = L-prolyl-tRNA(Pro) + AMP + diphosphate. In terms of biological role, catalyzes the attachment of proline to tRNA(Pro) in a two-step reaction: proline is first activated by ATP to form Pro-AMP and then transferred to the acceptor end of tRNA(Pro). In Rhodopirellula baltica (strain DSM 10527 / NCIMB 13988 / SH1), this protein is Proline--tRNA ligase.